The primary structure comprises 491 residues: Cobyric acid synthase (491 aa).

The region spanning 253 to 429 (AHRVAVVRLP…WHGSLEGDAL (177 aa)) is the GATase cobBQ-type domain. The active-site Nucleophile is Cys-334. The active site involves His-421.

This sequence belongs to the CobB/CobQ family. CobQ subfamily.

It participates in cofactor biosynthesis; adenosylcobalamin biosynthesis. Functionally, catalyzes amidations at positions B, D, E, and G on adenosylcobyrinic A,C-diamide. NH(2) groups are provided by glutamine, and one molecule of ATP is hydrogenolyzed for each amidation. This chain is Cobyric acid synthase, found in Mycobacterium ulcerans (strain Agy99).